Here is a 160-residue protein sequence, read N- to C-terminus: MPQITLVFISLSGNTLSFVKRLSLYLADNYDYHVKQINIKDLKHETFPVKEEFVAILPTYLEGGNGVDSGEAEILTTPLGEFIAAHGNAQRCLGIIGSGNKNFNHQYCLTAKQYAKRFGFPLLGDFELRGTPDDISRLAQVIMEASSRHSSNDTQTLPNS.

The protein belongs to the NrdI family.

The sequence is that of Putative NrdI-like protein from Streptococcus pyogenes serotype M3 (strain ATCC BAA-595 / MGAS315).